The following is a 105-amino-acid chain: Small ribosomal subunit protein uS10 (105 aa).

Belongs to the universal ribosomal protein uS10 family. As to quaternary structure, part of the 30S ribosomal subunit.

Involved in the binding of tRNA to the ribosomes. The polypeptide is Small ribosomal subunit protein uS10 (Chlamydia muridarum (strain MoPn / Nigg)).